Reading from the N-terminus, the 1030-residue chain is LPS-assembly protein LptD (1030 aa).

An N-terminal signal peptide occupies residues 1–32; that stretch reads MEGPPTAAHAAAPLRTAVFLALAASWQQPAVA. The segment at 50–213 is disordered; it reads VAKRKDGGAD…APAGWTCKPQ (164 aa). Residues 78–91 show a composition bias toward polar residues; it reads LSQSNRAAPSTAVS. Residues 126–137 show a composition bias toward acidic residues; it reads TEDEEDEESESA. The segment covering 161–171 has biased composition (pro residues); sequence GTPPARAPRPE.

Belongs to the LptD family. As to quaternary structure, component of the lipopolysaccharide transport and assembly complex. Interacts with LptE and LptA.

The protein resides in the cell outer membrane. In terms of biological role, together with LptE, is involved in the assembly of lipopolysaccharide (LPS) at the surface of the outer membrane. This Methylococcus capsulatus (strain ATCC 33009 / NCIMB 11132 / Bath) protein is LPS-assembly protein LptD.